The primary structure comprises 121 residues: Ubiquitin-related modifier 1 (121 aa).

The residue at position 121 (Gly-121) is a 1-thioglycine. Residue Gly-121 forms a Glycyl lysine isopeptide (Gly-Lys) (interchain with K-? in acceptor proteins) linkage.

Belongs to the URM1 family. Post-translationally, C-terminal thiocarboxylation occurs in 2 steps, it is first acyl-adenylated (-COAMP) via the hesA/moeB/thiF part of UBA4, then thiocarboxylated (-COSH) via the rhodanese domain of UBA4.

It localises to the cytoplasm. It functions in the pathway tRNA modification; 5-methoxycarbonylmethyl-2-thiouridine-tRNA biosynthesis. Acts as a sulfur carrier required for 2-thiolation of mcm(5)S(2)U at tRNA wobble positions of cytosolic tRNA(Lys), tRNA(Glu) and tRNA(Gln). Serves as sulfur donor in tRNA 2-thiolation reaction by being thiocarboxylated (-COSH) at its C-terminus by the MOCS3 homolog UBA4. The sulfur is then transferred to tRNA to form 2-thiolation of mcm(5)S(2)U. Prior mcm(5) tRNA modification by the elongator complex is required for 2-thiolation. Also acts as a ubiquitin-like protein (UBL) that is covalently conjugated via an isopeptide bond to lysine residues of target proteins such as AHP1. The thiocarboxylated form serves as substrate for conjugation and oxidative stress specifically induces the formation of UBL-protein conjugates. This Ajellomyces capsulatus (strain NAm1 / WU24) (Darling's disease fungus) protein is Ubiquitin-related modifier 1.